The chain runs to 246 residues: Peroxisomal membrane protein 11A (246 aa).

The Cytoplasmic portion of the chain corresponds to 1-93 (MDAFIRVANQ…LCLTLANLNR (93 aa)). Residues 94-114 (VVYYICDTVLWAKSVGLTSGI) traverse the membrane as a helical segment. The Lumenal segment spans residues 115-217 (NREKWQMRAA…LNQLGIYKSN (103 aa)). The chain crosses the membrane as a helical span at residues 218 to 238 (LGVVGFGGLVSSVAGLITVVY). Residues 218-238 (LGVVGFGGLVSSVAGLITVVY) form a required for homodimerization, interaction with PEX11G, and peroxisomal localization region. Topologically, residues 239–246 (PQLKLKAR) are cytoplasmic.

It belongs to the peroxin-11 family. Homodimer. Heterodimer with PEX11G. Probably interacts with COPB2 and COPA. Interacts with PEX19. Interacts with FIS1. Expressed at high levels in kidney, liver, lung, brain, and testis and at low levels in heart, spleen and skeletal muscle.

It localises to the peroxisome membrane. May be involved in peroxisomal proliferation and may regulate peroxisomes division. May mediate binding of coatomer proteins to the peroxisomal membrane. Promotes membrane protrusion and elongation on the peroxisomal surface. This is Peroxisomal membrane protein 11A (Pex11a) from Rattus norvegicus (Rat).